We begin with the raw amino-acid sequence, 132 residues long: Proline-rich protein sgp2 (132 aa).

The N-terminal stretch at 1-20 (MKYCFVFFVTLICLIANCSA) is a signal peptide. 2 disordered regions span residues 23–62 (EGDK…SNSR) and 87–132 (GASV…LGLP). A compositionally biased stretch (basic and acidic residues) spans 36–47 (KQIERASDKTSE). The span at 51-62 (GNTNAQGDSNSR) shows a compositional bias: polar residues. The segment covering 91–105 (PQLPDLPTTPSLPDM) has biased composition (low complexity).

It is found in the secreted. In Glossina morsitans morsitans (Savannah tsetse fly), this protein is Proline-rich protein sgp2 (sgp2).